The chain runs to 183 residues: Putative NAD(P)H nitroreductase YdjA (183 aa).

FMN contacts are provided by residues 10 to 12 (RRS), Arg-35, and His-39. 121–126 (AAVAQG) is a binding site for NAD(+). 131–133 (WRS) contributes to the FMN binding site.

The protein belongs to the nitroreductase family. Homodimer. Requires FMN as cofactor.

The sequence is that of Putative NAD(P)H nitroreductase YdjA (ydjA) from Escherichia coli O157:H7.